We begin with the raw amino-acid sequence, 278 residues long: HTH-type transcriptional regulator HdfR (278 aa).

The HTH lysR-type domain maps to 1–58; the sequence is MDTELLKTFLEVSRTRHFGRAAEALYLTQSAVSFRIRQLENQLGVNLFTRHRNNIRLT. Residues 18 to 37 constitute a DNA-binding region (H-T-H motif); sequence FGRAAEALYLTQSAVSFRIR.

This sequence belongs to the LysR transcriptional regulatory family.

In terms of biological role, negatively regulates the transcription of the flagellar master operon flhDC by binding to the upstream region of the operon. This chain is HTH-type transcriptional regulator HdfR, found in Salmonella agona (strain SL483).